A 197-amino-acid chain; its full sequence is Lipid A acyltransferase PagP (197 aa).

Residues 1–24 (MMFFKRTILACTVALLFPALPSYA) form the signal peptide. Active-site residues include His-69, Asp-112, and Ser-113.

The protein belongs to the lipid A palmitoyltransferase family. As to quaternary structure, homodimer.

It localises to the cell outer membrane. It catalyses the reaction a lipid A + a 1,2-diacyl-sn-glycero-3-phosphocholine = a hepta-acyl lipid A + a 2-acyl-sn-glycero-3-phosphocholine. It carries out the reaction a lipid IVA + a 1,2-diacyl-sn-glycero-3-phosphocholine = a lipid IVB + a 2-acyl-sn-glycero-3-phosphocholine. The catalysed reaction is a lipid IIA + a 1,2-diacyl-sn-glycero-3-phosphocholine = a lipid IIB + a 2-acyl-sn-glycero-3-phosphocholine. Functionally, transfers a fatty acid residue from the sn-1 position of a phospholipid to the N-linked hydroxyfatty acid chain on the proximal unit of lipid A or its precursors. This is Lipid A acyltransferase PagP from Serratia proteamaculans (strain 568).